The sequence spans 251 residues: Ubiquinone/menaquinone biosynthesis C-methyltransferase UbiE (251 aa).

S-adenosyl-L-methionine is bound by residues threonine 74, aspartate 95, 123–124, and serine 140; that span reads NA.

It belongs to the class I-like SAM-binding methyltransferase superfamily. MenG/UbiE family.

The enzyme catalyses a 2-demethylmenaquinol + S-adenosyl-L-methionine = a menaquinol + S-adenosyl-L-homocysteine + H(+). It catalyses the reaction a 2-methoxy-6-(all-trans-polyprenyl)benzene-1,4-diol + S-adenosyl-L-methionine = a 5-methoxy-2-methyl-3-(all-trans-polyprenyl)benzene-1,4-diol + S-adenosyl-L-homocysteine + H(+). The protein operates within quinol/quinone metabolism; menaquinone biosynthesis; menaquinol from 1,4-dihydroxy-2-naphthoate: step 2/2. It functions in the pathway cofactor biosynthesis; ubiquinone biosynthesis. Functionally, methyltransferase required for the conversion of demethylmenaquinol (DMKH2) to menaquinol (MKH2) and the conversion of 2-polyprenyl-6-methoxy-1,4-benzoquinol (DDMQH2) to 2-polyprenyl-3-methyl-6-methoxy-1,4-benzoquinol (DMQH2). The protein is Ubiquinone/menaquinone biosynthesis C-methyltransferase UbiE of Proteus mirabilis (strain HI4320).